Consider the following 233-residue polypeptide: Riboflavin kinase (233 aa).

Positions 1-99 (MSGATSTGDV…YRRIFEDPGE (99 aa)) are unknown. Residues 100-233 (LALAGTVTSG…DDEVTIRVEA (134 aa)) are riboflavin kinase. 109 to 114 (GMGEGR) serves as a coordination point for CDP. Positions 138 and 140 each coordinate Mg(2+). FMN-binding residues include T200 and E208. Residue 213 to 216 (VKLR) coordinates CDP.

The protein belongs to the archaeal riboflavin kinase family. Requires Mg(2+) as cofactor.

The enzyme catalyses riboflavin + CTP = CDP + FMN + H(+). It participates in cofactor biosynthesis; FMN biosynthesis; FMN from riboflavin (CTP route): step 1/1. Its function is as follows. Catalyzes the CTP-dependent phosphorylation of riboflavin (vitamin B2) to form flavin mononucleotide (FMN). This Halobacterium salinarum (strain ATCC 700922 / JCM 11081 / NRC-1) (Halobacterium halobium) protein is Riboflavin kinase (ribK).